We begin with the raw amino-acid sequence, 332 residues long: Iron-utilization periplasmic protein (332 aa).

Positions 1-23 (MQFKHFKLATLAAALAFSANSFA) are cleaved as a signal peptide. Fe cation-binding residues include H32, E80, Y218, and Y219.

This sequence belongs to the bacterial solute-binding protein 1 family. The complex is composed of two ATP-binding proteins (FbpC), two transmembrane proteins (FbpB) and a solute-binding protein (FbpA).

The protein resides in the periplasm. Functionally, part of the ABC transporter complex FbpABC (TC 3.A.1.10.1) involved in Fe(3+) ions import. This protein specifically binds Fe(3+) and is involved in its transmembrane transport. This is Iron-utilization periplasmic protein (fbpA) from Haemophilus influenzae (strain ATCC 51907 / DSM 11121 / KW20 / Rd).